Reading from the N-terminus, the 531-residue chain is Methyl-accepting chemotaxis protein McpN (531 aa).

Residues 1–24 are Cytoplasmic-facing; that stretch reads MNESVARVFDRILRGLGLKTLNAQ. The helical transmembrane segment at 25–45 threads the bilayer; sequence FLLSYALMFGLAACASVALYL. The Periplasmic portion of the chain corresponds to 46-174; it reads SMSISPETIN…LMSARADSVQ (129 aa). A pilJ-type region spans residues 52–140; it reads ETINVAGAQR…AMLDQVAQPA (89 aa). The N-box signature appears at 54-65; sequence INVAGAQRMLSQ. Arg-61 contacts nitrate. The chain crosses the membrane as a helical span at residues 175-195; the sequence is HTQMWIAFGCLLAILVLVVLG. At 196 to 531 the chain is on the cytoplasmic side; sequence RQFGLAPLMR…LRVVLGRFRT (336 aa). The region spanning 201–254 is the HAMP domain; the sequence is APLMRQLRGLEVALTEVGAANFTHALAAGHADNEIGRIVAGYERMRQDVSGLLA. Residues 259 to 495 enclose the Methyl-accepting transducer domain; that stretch reads SAAETDKDVA…DIDRNITNVS (237 aa).

This sequence belongs to the methyl-accepting chemotaxis (MCP) protein family. As to quaternary structure, ligand free ligand-binding domain (LBD) is present in a monomer-dimer equilibrium. Nitrate binding to the periplasmic LBD stabilizes the homodimer.

It localises to the cell inner membrane. Its function is as follows. Chemotactic-signal transducers respond to changes in the concentration of attractants and repellents in the environment, transduce a signal from the outside to the inside of the cell, and facilitate sensory adaptation through the variation of the level of methylation. McpN is a chemoreceptor that recognizes specifically nitrate and mediates chemoattraction. Binds nitrate specifically and shows no affinity for other ligands such as nitrite. McpN-mediated taxis occurs only under nitrate starvation conditions. The polypeptide is Methyl-accepting chemotaxis protein McpN (Pseudomonas aeruginosa (strain ATCC 15692 / DSM 22644 / CIP 104116 / JCM 14847 / LMG 12228 / 1C / PRS 101 / PAO1)).